The chain runs to 276 residues: Small ribosomal subunit protein uS2 (276 aa).

At serine 2 the chain carries N-acetylserine.

The protein belongs to the universal ribosomal protein uS2 family. Component of the small ribosomal subunit. Mature ribosomes consist of a small (40S) and a large (60S) subunit. The 40S subunit contains about 33 different proteins and 1 molecule of RNA (18S). The 60S subunit contains about 49 different proteins and 3 molecules of RNA (28S, 5.8S and 5S). Interacts with rps-21.

Its subcellular location is the cytoplasm. In terms of biological role, required for the assembly and/or stability of the 40S ribosomal subunit. Required for the processing of the 20S rRNA-precursor to mature 18S rRNA in a late step of the maturation of 40S ribosomal subunits. Involved in cold-warm shock-induced translocation of the RNA exosome components from the nucleolus to nucleoplasm. This Caenorhabditis elegans protein is Small ribosomal subunit protein uS2.